A 464-amino-acid chain; its full sequence is Dihydrolipoyl dehydrogenase (464 aa).

FAD contacts are provided by residues 33-41, lysine 50, and glycine 113; that span reads EPKYWGGVC. Cysteine 41 and cysteine 46 form a disulfide bridge. NAD(+) is bound by residues 178–182, glutamate 201, and 266–269; these read GAGAI and AIGF. FAD is bound by residues aspartate 309 and alanine 317. Catalysis depends on histidine 443, which acts as the Proton acceptor.

This sequence belongs to the class-I pyridine nucleotide-disulfide oxidoreductase family. As to quaternary structure, homodimer. Part of the PDH complex, consisting of multiple copies of AceE (E1), DlaT (E2) and Lpd (E3), and of the BCKADH complex, consisting of multiple copies of BkdA/BkdB (E1), BkdC (E2) and Lpd (E3). Requires FAD as cofactor.

The protein localises to the cytoplasm. It catalyses the reaction N(6)-[(R)-dihydrolipoyl]-L-lysyl-[protein] + NAD(+) = N(6)-[(R)-lipoyl]-L-lysyl-[protein] + NADH + H(+). Lipoamide dehydrogenase is a component of the alpha-ketoacid dehydrogenase complexes. Catalyzes the reoxidation of dihydrolipoyl groups which are covalently attached to the lipoate acyltransferase components (E2) of the complexes. This Mycobacterium bovis (strain ATCC BAA-935 / AF2122/97) protein is Dihydrolipoyl dehydrogenase (lpd).